Here is a 932-residue protein sequence, read N- to C-terminus: Beta-mannosidase A (932 aa).

A signal peptide spans M1–G21. 5 N-linked (GlcNAc...) asparagine glycosylation sites follow: N40, N248, N283, N317, and N348. E480 serves as the catalytic Proton donor. N-linked (GlcNAc...) asparagine glycosylation is found at N538, N609, N632, N659, N739, N762, and N791.

The protein belongs to the glycosyl hydrolase 2 family. Beta-mannosidase A subfamily. As to quaternary structure, homodimer.

The protein localises to the secreted. The catalysed reaction is Hydrolysis of terminal, non-reducing beta-D-mannose residues in beta-D-mannosides.. It functions in the pathway glycan metabolism; N-glycan degradation. Exoglycosidase that cleaves the single beta-linked mannose residue from the non-reducing end of beta-mannosidic oligosaccharides of various complexity and length. Involved in the degradation of polymeric mannan and galactomannan. The sequence is that of Beta-mannosidase A (mndA) from Aspergillus clavatus (strain ATCC 1007 / CBS 513.65 / DSM 816 / NCTC 3887 / NRRL 1 / QM 1276 / 107).